The chain runs to 1997 residues: MLSHGAGLALWITLSLLQTGLAEPERCNFTLAESKASSHSVSIQWRILGSPCNFSLIYSSDTLGAALCPTFRIDNTTYGCNLQDLQAGTIYNFRIISLDEERTVVLQTDPLPPARFGVSKEKTTSTSLHVWWTPSSGKVTSYEVQLFDENNQKIQGVQIQESTSWNEYTFFNLTAGSKYNIAITAVSGGKRSFSVYTNGSTVPSPVKDIGISTKANSLLISWSHGSGNVERYRLMLMDKGILVHGGVVDKHATSYAFHGLTPGYLYNLTVMTEAAGLQNYRWKLVRTAPMEVSNLKVTNDGSLTSLKVKWQRPPGNVDSYNITLSHKGTIKESRVLAPWITETHFKELVPGRLYQVTVSCVSGELSAQKMAVGRTFPDKVANLEANNNGRMRSLVVSWSPPAGDWEQYRILLFNDSVVLLNITVGKEETQYVMDDTGLVPGRQYEVEVIVESGNLKNSERCQGRTVPLAVLQLRVKHANETSLSIMWQTPVAEWEKYIISLADRDLLLIHKSLSKDAKEFTFTDLVPGRKYMATVTSISGDLKNSSSVKGRTVPAQVTDLHVANQGMTSSLFTNWTQAQGDVEFYQVLLIHENVVIKNESISSETSRYSFHSLKSGSLYSVVVTTVSGGISSRQVVVEGRTVPSSVSGVTVNNSGRNDYLSVSWLLAPGDVDNYEVTLSHDGKVVQSLVIAKSVRECSFSSLTPGRLYTVTITTRSGKYENHSFSQERTVPDKVQGVSVSNSARSDYLRVSWVHATGDFDHYEVTIKNKNNFIQTKSIPKSENECVFVQLVPGRLYSVTVTTKSGQYEANEQGNGRTIPEPVKDLTLRNRSTEDLHVTWSGANGDVDQYEIQLLFNDMKVFPPFHLVNTATEYRFTSLTPGRQYKILVLTISGDVQQSAFIEGFTVPSAVKNIHISPNGATDSLTVNWTPGGGDVDSYTVSAFRHSQKVDSQTIPKHVFEHTFHRLEAGEQYQIMIASVSGSLKNQINVVGRTVPASVQGVIADNAYSSYSLIVSWQKAAGVAERYDILLLTENGILLRNTSEPATTKQHKFEDLTPGKKYKIQILTVSGGLFSKEAQTEGRTVPAAVTDLRITENSTRHLSFRWTASEGELSWYNIFLYNPDGNLQERAQVDPLVQSFSFQNLLQGRMYKMVIVTHSGELSNESFIFGRTVPASVSHLRGSNRNTTDSLWFNWSPASGDFDFYELILYNPNGTKKENWKDKDLTEWRFQGLVPGRKYVLWVVTHSGDLSNKVTAESRTAPSPPSLMSFADIANTSLAITWKGPPDWTDYNDFELQWLPRDALTVFNPYNNRKSEGRIVYGLRPGRSYQFNVKTVSGDSWKTYSKPIFGSVRTKPDKIQNLHCRPQNSTAIACSWIPPDSDFDGYSIECRKMDTQEVEFSRKLEKEKSLLNIMMLVPHKRYLVSIKVQSAGMTSEVVEDSTITMIDRPPPPPPHIRVNEKDVLISKSSINFTVNCSWFSDTNGAVKYFTVVVREADGSDELKPEQQHPLPSYLEYRHNASIRVYQTNYFASKCAENPNSNSKSFNIKLGAEMESLGGKCDPTQQKFCDGPLKPHTAYRISIRAFTQLFDEDLKEFTKPLYSDTFFSLPITTESEPLFGAIEGVSAGLFLIGMLVAVVALLICRQKVSHGRERPSARLSIRRDRPLSVHLNLGQKGNRKTSCPIKINQFEGHFMKLQADSNYLLSKEYEELKDVGRNQSCDIALLPENRGKNRYNNILPYDATRVKLSNVDDDPCSDYINASYIPGNNFRREYIVTQGPLPGTKDDFWKMVWEQNVHNIVMVTQCVEKGRVKCDHYWPADQDSLYYGDLILQMLSESVLPEWTIREFKICGEEQLDAHRLIRHFHYTVWPDHGVPETTQSLIQFVRTVRDYINRSPGAGPTVVHCSAGVGRTGTFIALDRILQQLDSKDSVDIYGAVHDLRLHRVHMVQTECQYVYLHQCVRDVLRARKLRSEQENPLFPIYENVNPEYHRDPVYSRH.

A signal peptide spans 1 to 22 (MLSHGAGLALWITLSLLQTGLA). 17 consecutive Fibronectin type-III domains span residues 23–111 (EPER…TDPL), 112–207 (PPAR…SPVK), 203–288 (PSPV…VRTA), 291–378 (EVSN…TFPD), 379–471 (KVAN…LAVL), 467–552 (PLAV…KGRT), 556–641 (QVTD…EGRT), 642–729 (VPSS…QERT), 730–829 (VPDK…TLRN), 819–906 (PEPV…GFTV), 909–1001 (AVKN…VQGV), 995–1083 (PASV…EGRT), 1087–1175 (AVTD…VPAS), 1173–1260 (PASV…SRTA), 1260–1356 (APSP…TKPD), 1357–1448 (KIQN…IDRP), and 1458–1554 (NEKD…EMES). Over 23 to 1621 (EPERCNFTLA…ESEPLFGAIE (1599 aa)) the chain is Extracellular. N-linked (GlcNAc...) asparagine glycans are attached at residues Asn-28, Asn-53, Asn-75, Asn-172, Asn-198, Asn-267, Asn-321, Asn-414, Asn-421, Asn-479, Asn-544, Asn-574, Asn-598, Asn-652, Asn-721, and Asn-829. Residues Asn-1040, Asn-1096, Asn-1163, Asn-1185, Asn-1212, Asn-1274, Asn-1367, Asn-1470, Asn-1474, and Asn-1518 are each glycosylated (N-linked (GlcNAc...) asparagine). The helical transmembrane segment at 1622–1642 (GVSAGLFLIGMLVAVVALLIC) threads the bilayer. The Cytoplasmic portion of the chain corresponds to 1643 to 1997 (RQKVSHGRER…YHRDPVYSRH (355 aa)). One can recognise a Tyrosine-protein phosphatase domain in the interval 1703 to 1963 (LSKEYEELKD…VYLHQCVRDV (261 aa)). Substrate is bound by residues Asp-1870, 1904–1910 (CSAGVGR), and Gln-1948. Catalysis depends on Cys-1904, which acts as the Phosphocysteine intermediate. Position 1981 is a phosphotyrosine (Tyr-1981).

Belongs to the protein-tyrosine phosphatase family. Receptor class 3 subfamily. In terms of assembly, monomer. Interacts with TEK. Interacts via fibronectin type-III 17 domain with CDH5. Detected in a complex with CNTN1 and NRCAM. Interacts (phosphorylated form) with FYN and GRB2. Interacts with IGFBP2.

Its subcellular location is the membrane. The catalysed reaction is O-phospho-L-tyrosyl-[protein] + H2O = L-tyrosyl-[protein] + phosphate. Functionally, plays an important role in blood vessel remodeling and angiogenesis. Not necessary for the initial formation of blood vessels, but is essential for their maintenance and remodeling. Can induce dephosphorylation of TEK/TIE2, CDH5/VE-cadherin and KDR/VEGFR-2. Regulates angiopoietin-TIE2 signaling in endothelial cells. Acts as a negative regulator of TIE2, and controls TIE2 driven endothelial cell proliferation, which in turn affects blood vessel remodeling during embryonic development and determines blood vessel size during perinatal growth. Essential for the maintenance of endothelial cell contact integrity and for the adhesive function of VE-cadherin in endothelial cells and this requires the presence of plakoglobin. This Homo sapiens (Human) protein is Receptor-type tyrosine-protein phosphatase beta (PTPRB).